Reading from the N-terminus, the 509-residue chain is ATP synthase subunit alpha (509 aa).

G169–T176 contacts ATP.

It belongs to the ATPase alpha/beta chains family. In terms of assembly, F-type ATPases have 2 components, CF(1) - the catalytic core - and CF(0) - the membrane proton channel. CF(1) has five subunits: alpha(3), beta(3), gamma(1), delta(1), epsilon(1). CF(0) has three main subunits: a(1), b(2) and c(9-12). The alpha and beta chains form an alternating ring which encloses part of the gamma chain. CF(1) is attached to CF(0) by a central stalk formed by the gamma and epsilon chains, while a peripheral stalk is formed by the delta and b chains.

It localises to the cell membrane. It catalyses the reaction ATP + H2O + 4 H(+)(in) = ADP + phosphate + 5 H(+)(out). Its function is as follows. Produces ATP from ADP in the presence of a proton gradient across the membrane. The alpha chain is a regulatory subunit. The protein is ATP synthase subunit alpha of Limosilactobacillus reuteri (strain DSM 20016) (Lactobacillus reuteri).